A 166-amino-acid polypeptide reads, in one-letter code: Putative 4-hydroxy-4-methyl-2-oxoglutarate aldolase (166 aa).

Substrate is bound by residues 74–77 (GDQI) and arginine 96. Aspartate 97 lines the a divalent metal cation pocket.

It belongs to the class II aldolase/RraA-like family. In terms of assembly, homotrimer. A divalent metal cation serves as cofactor.

It carries out the reaction 4-hydroxy-4-methyl-2-oxoglutarate = 2 pyruvate. The enzyme catalyses oxaloacetate + H(+) = pyruvate + CO2. Catalyzes the aldol cleavage of 4-hydroxy-4-methyl-2-oxoglutarate (HMG) into 2 molecules of pyruvate. Also contains a secondary oxaloacetate (OAA) decarboxylase activity due to the common pyruvate enolate transition state formed following C-C bond cleavage in the retro-aldol and decarboxylation reactions. The protein is Putative 4-hydroxy-4-methyl-2-oxoglutarate aldolase of Xanthomonas campestris pv. campestris (strain B100).